The following is a 101-amino-acid chain: Precursor of CEP6 (101 aa).

The first 26 residues, 1–26 (MKLSVYIILSILFISTVFYEIQFTEA), serve as a signal peptide directing secretion. A propeptide spanning residues 27–48 (RQLRKTDDQDHDDHHFTVGYTD) is cleaved from the precursor. The segment covering 29–42 (LRKTDDQDHDDHHF) has biased composition (basic and acidic residues). A disordered region spans residues 29-101 (LRKTDDQDHD…HAVKNNEPNA (73 aa)). A hydroxyproline mark is found at proline 52, proline 55, and proline 59. Positions 64-77 (KMKENEENAGGYKD) are excised as a propeptide. Basic and acidic residues predominate over residues 64 to 79 (KMKENEENAGGYKDDF). Hydroxyproline is present on residues proline 81, proline 84, and proline 88. Positions 93–101 (AVKNNEPNA) are excised as a propeptide.

This sequence belongs to the C-terminally encoded plant signaling peptide (CEP) family. As to quaternary structure, interacts with CEP receptors (e.g. CEPR1 and CEPR2). In terms of processing, the mature small signaling peptide is generated by proteolytic processing of the longer precursor. Expressed in lateral root primordia and in lateral roots excluding the meristem region. Also present in the aerial tissues, such as leaf petioles and the shoot apex region.

It localises to the secreted. It is found in the extracellular space. The protein resides in the apoplast. In terms of biological role, extracellular signaling peptide that represses primary root growth rate. Modulates leaf morphology. Regulates systemic nitrogen (N)-demand signaling. Mediates up-regulation of genes involved in N uptake and assimilation pathways. This is Precursor of CEP6 from Arabidopsis thaliana (Mouse-ear cress).